The chain runs to 279 residues: Pantothenate synthetase (279 aa).

26–33 (MGNLHEGH) is an ATP binding site. His33 acts as the Proton donor in catalysis. Gln57 lines the (R)-pantoate pocket. Gln57 is a beta-alanine binding site. Residue 144-147 (GKKD) coordinates ATP. Residue Gln150 participates in (R)-pantoate binding. Residues Val173 and 181-184 (LSSR) each bind ATP.

This sequence belongs to the pantothenate synthetase family. In terms of assembly, homodimer.

The protein localises to the cytoplasm. It carries out the reaction (R)-pantoate + beta-alanine + ATP = (R)-pantothenate + AMP + diphosphate + H(+). It participates in cofactor biosynthesis; (R)-pantothenate biosynthesis; (R)-pantothenate from (R)-pantoate and beta-alanine: step 1/1. Functionally, catalyzes the condensation of pantoate with beta-alanine in an ATP-dependent reaction via a pantoyl-adenylate intermediate. This Burkholderia cenocepacia (strain HI2424) protein is Pantothenate synthetase.